The sequence spans 468 residues: UDP-N-acetylmuramate--L-alanine ligase (468 aa).

107–113 (GTHGKTT) serves as a coordination point for ATP.

Belongs to the MurCDEF family.

It localises to the cytoplasm. It catalyses the reaction UDP-N-acetyl-alpha-D-muramate + L-alanine + ATP = UDP-N-acetyl-alpha-D-muramoyl-L-alanine + ADP + phosphate + H(+). Its pathway is cell wall biogenesis; peptidoglycan biosynthesis. Functionally, cell wall formation. The sequence is that of UDP-N-acetylmuramate--L-alanine ligase from Roseiflexus sp. (strain RS-1).